The following is a 225-amino-acid chain: UPF0758 protein BCG9842_B0662 (225 aa).

An MPN domain is found at 103-225 (SIRSPEDCAK…FVSLKEKGHI (123 aa)). His-174, His-176, and Asp-187 together coordinate Zn(2+). A JAMM motif motif is present at residues 174-187 (HNHPSGDPTPSRED).

Belongs to the UPF0758 family.

In Bacillus cereus (strain G9842), this protein is UPF0758 protein BCG9842_B0662.